A 938-amino-acid polypeptide reads, in one-letter code: Isoleucine--tRNA ligase (938 aa).

Residues 58-68 carry the 'HIGH' region motif; the sequence is PYANGNIHIGH. E562 serves as a coordination point for L-isoleucyl-5'-AMP. Positions 603–607 match the 'KMSKS' region motif; the sequence is KMSKS. Position 606 (K606) interacts with ATP. Residues C901, C904, C921, and C924 each coordinate Zn(2+).

This sequence belongs to the class-I aminoacyl-tRNA synthetase family. IleS type 1 subfamily. As to quaternary structure, monomer. Zn(2+) is required as a cofactor.

The protein localises to the cytoplasm. It catalyses the reaction tRNA(Ile) + L-isoleucine + ATP = L-isoleucyl-tRNA(Ile) + AMP + diphosphate. Catalyzes the attachment of isoleucine to tRNA(Ile). As IleRS can inadvertently accommodate and process structurally similar amino acids such as valine, to avoid such errors it has two additional distinct tRNA(Ile)-dependent editing activities. One activity is designated as 'pretransfer' editing and involves the hydrolysis of activated Val-AMP. The other activity is designated 'posttransfer' editing and involves deacylation of mischarged Val-tRNA(Ile). This Actinobacillus pleuropneumoniae serotype 5b (strain L20) protein is Isoleucine--tRNA ligase.